The primary structure comprises 414 residues: MANSC domain-containing protein 1 (414 aa).

The signal sequence occupies residues 1–24; the sequence is MLFRGTSLAYSLLVISFLTPRSSA. Over 25 to 369 the chain is Extracellular; the sequence is GQNCLTKSLE…HGLSFEKWLL (345 aa). The MANSC domain maps to 32–116; sequence SLEDVVIDIQ…LKPAKGLVTY (85 aa). Residues Asn128, Asn234, and Asn335 are each glycosylated (N-linked (GlcNAc...) asparagine). The segment at 311 to 339 is disordered; it reads FQGGSTLTSDPRHGKSSTSESSITNKTAS. The segment covering 326–338 has biased composition (polar residues); it reads SSTSESSITNKTA. Residues 370-392 traverse the membrane as a helical segment; it reads IGTLLCGVLFLVIGLVLLGRMLV. Topologically, residues 393–414 are cytoplasmic; that stretch reads EALRRKRYSRLDYLINGIYVDI.

It localises to the membrane. The chain is MANSC domain-containing protein 1 (Mansc1) from Mus musculus (Mouse).